Reading from the N-terminus, the 360-residue chain is DNA replication and repair protein RecF (360 aa).

30–37 provides a ligand contact to ATP; the sequence is GQNGSGKT.

This sequence belongs to the RecF family.

It localises to the cytoplasm. Functionally, the RecF protein is involved in DNA metabolism; it is required for DNA replication and normal SOS inducibility. RecF binds preferentially to single-stranded, linear DNA. It also seems to bind ATP. This is DNA replication and repair protein RecF from Shewanella piezotolerans (strain WP3 / JCM 13877).